Consider the following 409-residue polypeptide: Peptidase T (409 aa).

His78 is a binding site for Zn(2+). The active site involves Asp80. Residue Asp140 coordinates Zn(2+). Glu173 functions as the Proton acceptor in the catalytic mechanism. Positions 174, 196, and 379 each coordinate Zn(2+).

The protein belongs to the peptidase M20B family. Zn(2+) is required as a cofactor.

It is found in the cytoplasm. It carries out the reaction Release of the N-terminal residue from a tripeptide.. In terms of biological role, cleaves the N-terminal amino acid of tripeptides. This is Peptidase T from Salmonella paratyphi A (strain ATCC 9150 / SARB42).